A 197-amino-acid chain; its full sequence is Imidazoleglycerol-phosphate dehydratase (197 aa).

It belongs to the imidazoleglycerol-phosphate dehydratase family.

The protein resides in the cytoplasm. The catalysed reaction is D-erythro-1-(imidazol-4-yl)glycerol 3-phosphate = 3-(imidazol-4-yl)-2-oxopropyl phosphate + H2O. It participates in amino-acid biosynthesis; L-histidine biosynthesis; L-histidine from 5-phospho-alpha-D-ribose 1-diphosphate: step 6/9. This Streptomyces avermitilis (strain ATCC 31267 / DSM 46492 / JCM 5070 / NBRC 14893 / NCIMB 12804 / NRRL 8165 / MA-4680) protein is Imidazoleglycerol-phosphate dehydratase.